Reading from the N-terminus, the 445-residue chain is tRNA-2-methylthio-N(6)-dimethylallyladenosine synthase (445 aa).

The MTTase N-terminal domain maps to 2-117; sequence QGLYIKSYGC…LPELIVKARK (116 aa). Residues C11, C47, C80, C157, C161, and C164 each contribute to the [4Fe-4S] cluster site. Residues 143 to 374 enclose the Radical SAM core domain; sequence KNQKVSAFIS…QELVHKQQLE (232 aa). The 65-residue stretch at 377-441 folds into the TRAM domain; that stretch reads KKMIGETHPV…KNHLTGIIPN (65 aa).

It belongs to the methylthiotransferase family. MiaB subfamily. Monomer. [4Fe-4S] cluster serves as cofactor.

The protein resides in the cytoplasm. The enzyme catalyses N(6)-dimethylallyladenosine(37) in tRNA + (sulfur carrier)-SH + AH2 + 2 S-adenosyl-L-methionine = 2-methylsulfanyl-N(6)-dimethylallyladenosine(37) in tRNA + (sulfur carrier)-H + 5'-deoxyadenosine + L-methionine + A + S-adenosyl-L-homocysteine + 2 H(+). Functionally, catalyzes the methylthiolation of N6-(dimethylallyl)adenosine (i(6)A), leading to the formation of 2-methylthio-N6-(dimethylallyl)adenosine (ms(2)i(6)A) at position 37 in tRNAs that read codons beginning with uridine. This is tRNA-2-methylthio-N(6)-dimethylallyladenosine synthase from Ehrlichia ruminantium (strain Welgevonden).